We begin with the raw amino-acid sequence, 152 residues long: FMN reductase (NADH) RutF (152 aa).

It belongs to the non-flavoprotein flavin reductase family. RutF subfamily.

The catalysed reaction is FMNH2 + NAD(+) = FMN + NADH + 2 H(+). Functionally, catalyzes the reduction of FMN to FMNH2 which is used to reduce pyrimidine by RutA via the Rut pathway. This is FMN reductase (NADH) RutF from Shigella flexneri.